We begin with the raw amino-acid sequence, 252 residues long: MRKKIVVGNWKMNNGVAASEQLAADLLAALGSSFTGCDVGIAPTFLSLTTAGKVIAGSTIQLVAQNCHYENDGAYTGEVSAAMLKGAGCSSVIIGHSERRQFFGETNATVNLRVKKALAEGLDVILCVGETLAERESGVTGDIVSAQVREGLVGVSDISNVVIAYEPVWAIGTGKTATSAQAEEVHLMIRTLVTELYGEPAAQALRIQYGGSVKPSNAVELFAMPNIDGGLIGGASLNAADFVAIVQAAAGK.

Position 9–11 (9–11) interacts with substrate; it reads NWK. The active-site Electrophile is His96. Glu166 acts as the Proton acceptor in catalysis. Substrate contacts are provided by residues Gly172, Ser212, and 233–234; that span reads GG.

This sequence belongs to the triosephosphate isomerase family. In terms of assembly, homodimer.

It is found in the cytoplasm. The enzyme catalyses D-glyceraldehyde 3-phosphate = dihydroxyacetone phosphate. The protein operates within carbohydrate biosynthesis; gluconeogenesis. It functions in the pathway carbohydrate degradation; glycolysis; D-glyceraldehyde 3-phosphate from glycerone phosphate: step 1/1. Involved in the gluconeogenesis. Catalyzes stereospecifically the conversion of dihydroxyacetone phosphate (DHAP) to D-glyceraldehyde-3-phosphate (G3P). In Chlorobium chlorochromatii (strain CaD3), this protein is Triosephosphate isomerase.